The primary structure comprises 326 residues: uncharacterized protein (326 aa).

Solcar repeat units follow at residues 20–107, 120–219, and 231–322; these read QDSN…CKKK, LTNT…LREF, and KSNL…VCDS. 6 helical membrane passes run 24–40, 84–104, 126–143, 195–213, 237–254, and 297–316; these read IAFLAGGVAGAVSRTVV, GLNCIRIFPYSAVQFVVYEAC, LFSGALCGGCSVVATYPL, VWPTSLGVVPYVALNFAVY, LTIGAISGGVAQTITYPF, and GLAANLFKVVPSTAVSWLVY.

This sequence belongs to the mitochondrial carrier (TC 2.A.29) family.

It is found in the mitochondrion inner membrane. This is an uncharacterized protein from Saccharomyces cerevisiae (strain ATCC 204508 / S288c) (Baker's yeast).